Consider the following 232-residue polypeptide: Large ribosomal subunit protein uL1 (232 aa).

The protein belongs to the universal ribosomal protein uL1 family. Part of the 50S ribosomal subunit.

Functionally, binds directly to 23S rRNA. The L1 stalk is quite mobile in the ribosome, and is involved in E site tRNA release. Its function is as follows. Protein L1 is also a translational repressor protein, it controls the translation of the L11 operon by binding to its mRNA. The polypeptide is Large ribosomal subunit protein uL1 (Xylella fastidiosa (strain M23)).